We begin with the raw amino-acid sequence, 30 residues long: ERRCPRILKQCKRDSDCPGECICMAHGFCG.

Disulfide bonds link Cys4–Cys21, Cys11–Cys23, and Cys17–Cys29.

Belongs to the protease inhibitor I7 (squash-type serine protease inhibitor) family.

It is found in the secreted. In terms of biological role, inhibits trypsin. This chain is Trypsin inhibitor 1, found in Momordica charantia (Bitter gourd).